The sequence spans 167 residues: uncharacterized protein (167 aa).

In terms of domain architecture, N-acetyltransferase spans 9–167 (PVMRRLTLQD…DCEVRMLREL (159 aa)).

The protein belongs to the acetyltransferase family.

This is an uncharacterized protein from Escherichia coli (strain K12).